The sequence spans 502 residues: ATP synthase subunit alpha (502 aa).

169 to 176 contributes to the ATP binding site; sequence GDRQTGKT.

Belongs to the ATPase alpha/beta chains family. F-type ATPases have 2 components, CF(1) - the catalytic core - and CF(0) - the membrane proton channel. CF(1) has five subunits: alpha(3), beta(3), gamma(1), delta(1), epsilon(1). CF(0) has three main subunits: a(1), b(2) and c(9-12). The alpha and beta chains form an alternating ring which encloses part of the gamma chain. CF(1) is attached to CF(0) by a central stalk formed by the gamma and epsilon chains, while a peripheral stalk is formed by the delta and b chains.

It is found in the cell membrane. It carries out the reaction ATP + H2O + 4 H(+)(in) = ADP + phosphate + 5 H(+)(out). Produces ATP from ADP in the presence of a proton gradient across the membrane. The alpha chain is a regulatory subunit. In Streptococcus pyogenes serotype M12 (strain MGAS9429), this protein is ATP synthase subunit alpha.